The primary structure comprises 291 residues: 4-diphosphocytidyl-2-C-methyl-D-erythritol kinase (291 aa).

Lysine 11 is an active-site residue. Proline 95–serine 105 serves as a coordination point for ATP. Residue aspartate 137 is part of the active site.

This sequence belongs to the GHMP kinase family. IspE subfamily.

It carries out the reaction 4-CDP-2-C-methyl-D-erythritol + ATP = 4-CDP-2-C-methyl-D-erythritol 2-phosphate + ADP + H(+). It functions in the pathway isoprenoid biosynthesis; isopentenyl diphosphate biosynthesis via DXP pathway; isopentenyl diphosphate from 1-deoxy-D-xylulose 5-phosphate: step 3/6. Functionally, catalyzes the phosphorylation of the position 2 hydroxy group of 4-diphosphocytidyl-2C-methyl-D-erythritol. This chain is 4-diphosphocytidyl-2-C-methyl-D-erythritol kinase, found in Lachnoclostridium phytofermentans (strain ATCC 700394 / DSM 18823 / ISDg) (Clostridium phytofermentans).